The sequence spans 393 residues: Nucleoside permease NupC (393 aa).

9 helical membrane-spanning segments follow: residues 3–23, 32–52, 87–107, 168–188, 191–211, 249–269, 272–292, 334–354, and 372–392; these read YLIG…ASSG, IVVM…TGIG, TTFF…IGIL, LCAS…MTML, EYVV…ASII, VVVA…NGIF, VFGI…AFLV, AIVS…IIAG, and LKLL…VGLI.

This sequence belongs to the concentrative nucleoside transporter (CNT) (TC 2.A.41) family.

The protein localises to the cell membrane. Its function is as follows. Transport of the pyrimidine nucleoside uridine. The sequence is that of Nucleoside permease NupC from Bacillus subtilis (strain 168).